A 453-amino-acid polypeptide reads, in one-letter code: Tol-Pal system protein TolB (453 aa).

Residues 1–34 form the signal peptide; it reads MYLIIKKTHKLPHWLQKVSLSIMLIIFLWKPALL.

Belongs to the TolB family. The Tol-Pal system is composed of five core proteins: the inner membrane proteins TolA, TolQ and TolR, the periplasmic protein TolB and the outer membrane protein Pal. They form a network linking the inner and outer membranes and the peptidoglycan layer.

It localises to the periplasm. Part of the Tol-Pal system, which plays a role in outer membrane invagination during cell division and is important for maintaining outer membrane integrity. TolB occupies a key intermediary position in the Tol-Pal system because it communicates directly with both membrane-embedded components, Pal in the outer membrane and TolA in the inner membrane. This Blochmanniella pennsylvanica (strain BPEN) protein is Tol-Pal system protein TolB.